Consider the following 396-residue polypeptide: L-lactate dehydrogenase (396 aa).

The FMN hydroxy acid dehydrogenase domain occupies 1-380 (MIISAASDYR…TQDSLVQVLG (380 aa)). Residue Y24 participates in substrate binding. FMN is bound by residues S106 and Q127. Y129 provides a ligand contact to substrate. An FMN-binding site is contributed by T155. R164 contributes to the substrate binding site. Position 251 (K251) interacts with FMN. H275 functions as the Proton acceptor in the catalytic mechanism. R278 is a binding site for substrate. Residue 306–330 (DSGIRNGLDVVRMIALGADTVLLGR) participates in FMN binding.

It belongs to the FMN-dependent alpha-hydroxy acid dehydrogenase family. Requires FMN as cofactor.

It localises to the cell inner membrane. It catalyses the reaction (S)-lactate + A = pyruvate + AH2. Catalyzes the conversion of L-lactate to pyruvate. Is coupled to the respiratory chain. This is L-lactate dehydrogenase from Escherichia coli O45:K1 (strain S88 / ExPEC).